A 306-amino-acid polypeptide reads, in one-letter code: ATP synthase gamma chain (306 aa).

Belongs to the ATPase gamma chain family. In terms of assembly, F-type ATPases have 2 components, CF(1) - the catalytic core - and CF(0) - the membrane proton channel. CF(1) has five subunits: alpha(3), beta(3), gamma(1), delta(1), epsilon(1). CF(0) has three main subunits: a, b and c.

Its subcellular location is the cell membrane. Its function is as follows. Produces ATP from ADP in the presence of a proton gradient across the membrane. The gamma chain is believed to be important in regulating ATPase activity and the flow of protons through the CF(0) complex. The chain is ATP synthase gamma chain from Bifidobacterium animalis subsp. lactis (strain AD011).